The following is a 131-amino-acid chain: Small ribosomal subunit protein uS8 (131 aa).

This sequence belongs to the universal ribosomal protein uS8 family. As to quaternary structure, part of the 30S ribosomal subunit. Contacts proteins S5 and S12.

In terms of biological role, one of the primary rRNA binding proteins, it binds directly to 16S rRNA central domain where it helps coordinate assembly of the platform of the 30S subunit. This chain is Small ribosomal subunit protein uS8, found in Neorickettsia sennetsu (strain ATCC VR-367 / Miyayama) (Ehrlichia sennetsu).